We begin with the raw amino-acid sequence, 297 residues long: Indole-3-glycerol phosphate synthase (297 aa).

This sequence belongs to the TrpC family.

The enzyme catalyses 1-(2-carboxyphenylamino)-1-deoxy-D-ribulose 5-phosphate + H(+) = (1S,2R)-1-C-(indol-3-yl)glycerol 3-phosphate + CO2 + H2O. It participates in amino-acid biosynthesis; L-tryptophan biosynthesis; L-tryptophan from chorismate: step 4/5. This is Indole-3-glycerol phosphate synthase from Trichodesmium erythraeum (strain IMS101).